Here is a 365-residue protein sequence, read N- to C-terminus: Casein kinase I homolog hhp1 (365 aa).

The Protein kinase domain occupies 11–279 (YRIGRKIGSG…YLRKLFRDLF (269 aa)). Residues 17–25 (IGSGSFGDI) and Lys40 contribute to the ATP site. The active-site Proton acceptor is Asp130. Over residues 301–311 (DQQHQQQLQQQ) the composition is skewed to low complexity. The disordered stretch occupies residues 301–365 (DQQHQQQLQQ…TGAQYINRPN (65 aa)). Positions 343–365 (INTTVPVINDPSATGAQYINRPN) are enriched in polar residues.

It belongs to the protein kinase superfamily. CK1 Ser/Thr protein kinase family. Casein kinase I subfamily.

The protein localises to the nucleus. It carries out the reaction L-seryl-[protein] + ATP = O-phospho-L-seryl-[protein] + ADP + H(+). The enzyme catalyses L-threonyl-[protein] + ATP = O-phospho-L-threonyl-[protein] + ADP + H(+). Involved in DNA repair. Has a probable role in repairing alkylated DNA and may regulate the activity of protein(s) involved in double strand break repair caused by gamma rays. The protein is Casein kinase I homolog hhp1 (hhp1) of Schizosaccharomyces pombe (strain 972 / ATCC 24843) (Fission yeast).